The following is a 365-amino-acid chain: Chorismate synthase (365 aa).

Positions 48 and 54 each coordinate NADP(+). Residues 125–127, 237–238, glycine 277, 292–296, and arginine 318 each bind FMN; these read RSS, NA, and KPTSS.

This sequence belongs to the chorismate synthase family. In terms of assembly, homotetramer. It depends on FMNH2 as a cofactor.

The catalysed reaction is 5-O-(1-carboxyvinyl)-3-phosphoshikimate = chorismate + phosphate. The protein operates within metabolic intermediate biosynthesis; chorismate biosynthesis; chorismate from D-erythrose 4-phosphate and phosphoenolpyruvate: step 7/7. In terms of biological role, catalyzes the anti-1,4-elimination of the C-3 phosphate and the C-6 proR hydrogen from 5-enolpyruvylshikimate-3-phosphate (EPSP) to yield chorismate, which is the branch point compound that serves as the starting substrate for the three terminal pathways of aromatic amino acid biosynthesis. This reaction introduces a second double bond into the aromatic ring system. The protein is Chorismate synthase of Polaromonas naphthalenivorans (strain CJ2).